Reading from the N-terminus, the 796-residue chain is Pathogenesis-related homeodomain protein (796 aa).

Disordered regions lie at residues 34–57 (KKGK…EELC) and 80–99 (VKKT…KVEV). Residues 81–90 (KKTRKRKSKR) show a composition bias toward basic residues. The PHD-type zinc-finger motif lies at 190 to 247 (HIFCAECNSREAFPDNDIILCDGTCNRAFHQKCLDPPLETESIPPGDQGWFCKFCDCK). 3 disordered regions span residues 282–347 (SEAT…STGS), 393–422 (LQEQ…STLV), and 511–736 (NRKT…TEEE). Over residues 292-303 (WPSDDSKDDDYD) the composition is skewed to acidic residues. Residues 452 to 511 (GGRRRMFRLPRNAVEKLRQVFAETELPSKAVRDRLAKELSLDPEKVNKWFKNTRYMALRN) constitute a DNA-binding region (homeobox). 2 stretches are compositionally biased toward polar residues: residues 538-547 (ENNTETNEVQ) and 560-569 (ATNQNILSPC). The span at 570–580 (NNNQEEFQQEN) shows a compositional bias: low complexity. A compositionally biased stretch (polar residues) spans 581 to 600 (VSFPSPTDESQQYLEQNDSS). 4 tandem repeats follow at residues 605-631 (PHEK…MMKE), 632-658 (PHEE…MIEE), 659-685 (PHEE…MMEE), and 686-712 (PHDE…MTEE). A 5 X 27 AA tandem repeats region spans residues 605-735 (PHEKQSSEIS…KETGRKMTEE (131 aa)). Composition is skewed to basic and acidic residues over residues 624-636 (TESK…HEEL), 645-690 (AAEE…HDEL), and 700-733 (VEEK…RKMT). The stretch at 713 to 735 (SHEELSNEMSLEEKETGRKMTEE) is one 5; truncated repeat. The segment at 738 to 759 (LEAVMEMLCRTENKLLDVTQRL) is leucine-zipper.

It belongs to the PHD-associated homeobox family.

It localises to the nucleus. Functionally, specifically binds to the fungal elicitor-responsive DNA element, 5'-CTAATTGTTTA-3', of the gene PR2 promoter. The polypeptide is Pathogenesis-related homeodomain protein (PRH) (Arabidopsis thaliana (Mouse-ear cress)).